The following is a 122-amino-acid chain: Large ribosomal subunit protein uL14 (122 aa).

Belongs to the universal ribosomal protein uL14 family. Part of the 50S ribosomal subunit. Forms a cluster with proteins L3 and L19. In the 70S ribosome, L14 and L19 interact and together make contacts with the 16S rRNA in bridges B5 and B8.

In terms of biological role, binds to 23S rRNA. Forms part of two intersubunit bridges in the 70S ribosome. In Leuconostoc mesenteroides subsp. mesenteroides (strain ATCC 8293 / DSM 20343 / BCRC 11652 / CCM 1803 / JCM 6124 / NCDO 523 / NBRC 100496 / NCIMB 8023 / NCTC 12954 / NRRL B-1118 / 37Y), this protein is Large ribosomal subunit protein uL14.